A 307-amino-acid polypeptide reads, in one-letter code: Agmatinase (307 aa).

Positions 128, 151, 153, 155, 232, and 234 each coordinate Mn(2+).

Belongs to the arginase family. Agmatinase subfamily. It depends on Mn(2+) as a cofactor.

The catalysed reaction is agmatine + H2O = urea + putrescine. It functions in the pathway amine and polyamine biosynthesis; putrescine biosynthesis via agmatine pathway; putrescine from agmatine: step 1/1. Functionally, catalyzes the formation of putrescine from agmatine. The protein is Agmatinase of Neisseria meningitidis serogroup A / serotype 4A (strain DSM 15465 / Z2491).